A 326-amino-acid chain; its full sequence is Protein SEH1 (326 aa).

WD repeat units follow at residues 7 to 46 (TLDSGTTCSSWNQSGDRLAAGSLNGKLSIYESSTSSSSTF), 54 to 95 (VSES…AHGL), 105 to 146 (NKSS…ELKN), 224 to 266 (DKGD…DLEG), and 278 to 317 (GHQGEVWQMEWDMSGMTLASTGSDGMVKLWQSNLNGEWHE).

This sequence belongs to the WD repeat SEC13 family. As to quaternary structure, part of the nuclear pore complex (NPC). The NPC has an eight-fold symmetrical structure comprising a central transport channel and two rings, the cytoplasmic and nuclear rings, to which eight filaments are attached. The cytoplasmic filaments have loose ends, while the nuclear filaments are joined in a distal ring, forming a nuclear basket. NPCs are highly dynamic in configuration and composition, and can be devided in 3 subcomplexes, the NUP62 subcomplex, the NUP107-160 subcomplex and the NUP93 subcomplex, containing approximately 30 different nucleoporin proteins.

Its subcellular location is the nucleus envelope. It localises to the nucleus. The protein resides in the cytoplasm. The protein localises to the nuclear pore complex. Functionally, required for proper export of mRNAs from the nucleus to the cytoplasm. This chain is Protein SEH1, found in Arabidopsis thaliana (Mouse-ear cress).